The following is a 77-amino-acid chain: Putative defensin-like protein 120 (77 aa).

Residues 1-26 form the signal peptide; it reads MTQKATILAIFMVVLVLGLETKETQG. Cystine bridges form between cysteine 30–cysteine 75, cysteine 39–cysteine 60, cysteine 44–cysteine 69, and cysteine 48–cysteine 71.

Belongs to the DEFL family.

The protein localises to the secreted. This chain is Putative defensin-like protein 120 (LCR56), found in Arabidopsis thaliana (Mouse-ear cress).